Here is a 558-residue protein sequence, read N- to C-terminus: MARVEL domain-containing protein 2 (558 aa).

Over residues 1-16 (MSNDGRSRNRDRRYDE) the composition is skewed to basic and acidic residues. 2 disordered regions span residues 1 to 58 (MSND…PPFG) and 115 to 145 (CSPP…GTFS). The Cytoplasmic segment spans residues 1-194 (MSNDGRSRNR…YMKSWAGLLR (194 aa)). Positions 45–58 (PLPPPPLPLQPPFG) are enriched in pro residues. 3 positions are modified to phosphoserine: serine 116, serine 120, and serine 161. Phosphothreonine is present on threonine 166. Positions 188–367 (SWAGLLRILG…SALVCLKLWR (180 aa)) constitute an MARVEL domain. A helical membrane pass occupies residues 195–215 (ILGVVELLLGAGVFACVTAYI). The Extracellular segment spans residues 216-223 (HKDSEWYN). A helical transmembrane segment spans residues 224 to 244 (LFGYSQPYGMGGVGGLGSMYG). At 245–254 (GYYYTGPKTP) the chain is on the cytoplasmic side. The helical transmembrane segment at 255–275 (FVLVVAGLAWITTIIILVLGM) threads the bilayer. Over 276 to 291 (SMYYRTILLDSNWWPL) the chain is Extracellular. Residues 292–312 (TEFGINVALFILYMAAAIVYV) form a helical membrane-spanning segment. Residues 313 to 319 (NDTNRGG) are Cytoplasmic-facing. Residues 320-337 (LCYYPLFNTPVNAVFCRV) form a helical membrane-spanning segment. Residues 338 to 341 (EGGQ) lie on the Extracellular side of the membrane. Residues 342–362 (IAAMIFLFVTMIVYLISALVC) traverse the membrane as a helical segment. The Cytoplasmic portion of the chain corresponds to 363–558 (LKLWRHEAAR…VMNWDVQGYS (196 aa)). Serine 387 bears the Phosphoserine mark. Lysine 412 is covalently cross-linked (Glycyl lysine isopeptide (Lys-Gly) (interchain with G-Cter in ubiquitin)). The stretch at 439-548 (MPDYVAKYPV…IKQRIQEYDK (110 aa)) forms a coiled coil. In terms of domain architecture, OCEL spans 440 to 551 (PDYVAKYPVI…RIQEYDKVMN (112 aa)).

The protein belongs to the ELL/occludin family. In terms of assembly, interacts with TJP1. Interacts with the ubiquitin ligase ITCH. Interacts (via C-terminal cytoplasmic domain) with LSR (via the cytoplasmic domain), ILDR1 and ILDR2; the interaction is required to recruit MARVELD2 to tricellular contacts. Post-translationally, ubiquitinated by ITCH; but this ubiquitination does not lead to proteasomal degradation. Polyubiquitinated at Lys-412 via 'Lys-63'-linked ubiquitin chains; deubiquitinated by USP53. In terms of processing, phosphorylated.

The protein localises to the cell membrane. The protein resides in the cell junction. It localises to the tight junction. Its function is as follows. Plays a role in the formation of tricellular tight junctions and of epithelial barriers. Required for normal hearing via its role in the separation of the endolymphatic and perilymphatic spaces of the organ of Corti in the inner ear, and for normal survival of hair cells in the organ of Corti. In Homo sapiens (Human), this protein is MARVEL domain-containing protein 2.